The following is a 266-amino-acid chain: Type II iodothyronine deiodinase (266 aa).

Residues 1 to 13 (MGSASEDLLVTLQ) are Lumenal-facing. The chain crosses the membrane as a helical; Signal-anchor for type III membrane protein span at residues 14–34 (ILPGFFSNCLFLALYDSVVLV). Over 35–266 (KRVVALLSRS…QWLELSYGRR (232 aa)) the chain is Cytoplasmic. Residue U134 is part of the active site. U134 is a non-standard amino acid (selenocysteine).

It belongs to the iodothyronine deiodinase family. In terms of assembly, predominantly monomer. Can form homodimers but homodimerization is not essential for enzyme activity.

It is found in the endoplasmic reticulum membrane. The catalysed reaction is 3,3',5-triiodo-L-thyronine + iodide + A + H(+) = L-thyroxine + AH2. It catalyses the reaction 3,3'-diiodo-L-thyronine + iodide + A + H(+) = 3,3',5'-triiodo-L-thyronine + AH2. It carries out the reaction 3'-iodo-L-thyronine + iodide + A + H(+) = 3',5'-diiodo-L-thyronine + AH2. With respect to regulation, not inhibited by N(6)-propylthiouracil. In terms of biological role, plays a crucial role in the metabolism of thyroid hormones (TH) and has specific roles in TH activation and inactivation by deiodination. Catalyzes the conversion of T4 (L-thyroxine/3,5,3',5'-tetraiodothyronine) to T3 (3,5,3'-triiodothyronine) and rT3 (3,3',5'-triiodothyronine) to T2 (3,3'-diiodothyronine) via outer-ring deiodination (ORD). Catalyzes the conversion 3',5'-T2 (3,5-diiodothyronine) to 3-T1 (3-monoiodothyronine) via ORD. In Fundulus heteroclitus (Killifish), this protein is Type II iodothyronine deiodinase (dio2).